The following is a 161-amino-acid chain: Tropomyosin (161 aa).

The stretch at 1 to 161 forms a coiled coil; it reads MDKLREKINA…DEVHQALEDL (161 aa). Basic and acidic residues predominate over residues 40-52; the sequence is EQEYESLSRKSEA. Disordered regions lie at residues 40 to 65 and 107 to 134; these read EQEY…EETK and EKMR…DDME.

In terms of assembly, homodimer.

It localises to the cytoplasm. The protein localises to the cytoskeleton. Functionally, forms part of the F-actin contractile ring during cytokinesis. The chain is Tropomyosin (cdc8) from Schizosaccharomyces pombe (strain 972 / ATCC 24843) (Fission yeast).